Reading from the N-terminus, the 833-residue chain is Leucine--tRNA ligase (833 aa).

Positions 41–52 (PYPSGAGLHVGH) match the 'HIGH' region motif. The short motif at 610-614 (KMSKS) is the 'KMSKS' region element. Residue Lys-613 participates in ATP binding.

This sequence belongs to the class-I aminoacyl-tRNA synthetase family.

The protein resides in the cytoplasm. It carries out the reaction tRNA(Leu) + L-leucine + ATP = L-leucyl-tRNA(Leu) + AMP + diphosphate. This is Leucine--tRNA ligase from Streptococcus pyogenes serotype M4 (strain MGAS10750).